Reading from the N-terminus, the 709-residue chain is ATP-binding cassette sub-family F member 3 (709 aa).

A2 is subject to N-acetylalanine. The residue at position 83 (S83) is a Phosphoserine. A compositionally biased stretch (basic and acidic residues) spans R129–L143. The segment at R129 to G171 is disordered. 3 positions are modified to phosphoserine: S155, S157, and S161. Positions S161–G171 are enriched in basic and acidic residues. ABC transporter domains lie at V178–Q424 and L492–G707. G210–T217 provides a ligand contact to ATP. S283 is modified (phosphoserine). G525–S532 is an ATP binding site.

It belongs to the ABC transporter superfamily. ABCF family. EF3 subfamily.

Its function is as follows. Displays an antiviral effect against flaviviruses such as west Nile virus (WNV) in the presence of OAS1B. The protein is ATP-binding cassette sub-family F member 3 (Abcf3) of Mus musculus (Mouse).